A 280-amino-acid chain; its full sequence is DCN1-like protein 4 (280 aa).

Positions 37–71 are disordered; that stretch reads GPESHGTACCSRAMPPRKKRRPTAGDDLSAKKSRQ. One can recognise a DCUN1 domain in the interval 89–275; sequence FSSKRCLEWF…LLDEFVEWYK (187 aa).

As to quaternary structure, may interact (via the DCUN1 domain) with unneddylated cullins.

It localises to the nucleus. Contributes to the neddylation of all cullins by transferring NEDD8 from N-terminally acetylated NEDD8-conjugating E2s enzyme to different cullin C-terminal domain-RBX complexes. The chain is DCN1-like protein 4 from Danio rerio (Zebrafish).